The chain runs to 502 residues: Cytochrome P450 2J3 (502 aa).

Residue C448 coordinates heme.

It belongs to the cytochrome P450 family. Heme serves as cofactor. As to expression, abundantly expressed in heart and liver.

The protein resides in the endoplasmic reticulum membrane. The protein localises to the microsome membrane. It catalyses the reaction an organic molecule + reduced [NADPH--hemoprotein reductase] + O2 = an alcohol + oxidized [NADPH--hemoprotein reductase] + H2O + H(+). Functionally, this enzyme metabolizes arachidonic acid predominantly via a NADPH-dependent olefin epoxidation mainly to 14,15-, 11,12-, and 8,9-epoxyeicosatrienoic acids (EET). It also acts as an omega-1-hydroxylase by metabolizing arachidonic acid to 19-hydroxyeicosatetraenoic acid (19-OH-AA). The polypeptide is Cytochrome P450 2J3 (Cyp2j3) (Rattus norvegicus (Rat)).